Reading from the N-terminus, the 874-residue chain is Alanine--tRNA ligase (874 aa).

The Zn(2+) site is built by His564, His568, Cys665, and His669.

It belongs to the class-II aminoacyl-tRNA synthetase family. Zn(2+) serves as cofactor.

The protein localises to the cytoplasm. It catalyses the reaction tRNA(Ala) + L-alanine + ATP = L-alanyl-tRNA(Ala) + AMP + diphosphate. Its function is as follows. Catalyzes the attachment of alanine to tRNA(Ala) in a two-step reaction: alanine is first activated by ATP to form Ala-AMP and then transferred to the acceptor end of tRNA(Ala). Also edits incorrectly charged Ser-tRNA(Ala) and Gly-tRNA(Ala) via its editing domain. This chain is Alanine--tRNA ligase, found in Burkholderia orbicola (strain MC0-3).